The primary structure comprises 273 residues: Undecaprenyl-diphosphatase (273 aa).

The next 7 helical transmembrane spans lie at 13–35 (GLVEGFTEFLPISSTGHLIVFGN), 45–62 (VFEIAIQLGAVLAVVFEY), 82–102 (FVLNLAIAFIPAAVMGLLFDK), 108–128 (LFNPLSVAVMLVLGGFFILWV), 186–206 (TEFSFFLAVPMMVAATAYDVL), 219–239 (LILIGFIAAFVSGLVAVKALL), and 250–270 (FAYYRIVFGIVIIILWLSGWI).

This sequence belongs to the UppP family.

The protein localises to the cell inner membrane. It carries out the reaction di-trans,octa-cis-undecaprenyl diphosphate + H2O = di-trans,octa-cis-undecaprenyl phosphate + phosphate + H(+). Its function is as follows. Catalyzes the dephosphorylation of undecaprenyl diphosphate (UPP). Confers resistance to bacitracin. This chain is Undecaprenyl-diphosphatase, found in Neisseria gonorrhoeae (strain ATCC 700825 / FA 1090).